The sequence spans 519 residues: Glutamate--cysteine ligase (519 aa).

It belongs to the glutamate--cysteine ligase type 1 family. Type 1 subfamily.

The enzyme catalyses L-cysteine + L-glutamate + ATP = gamma-L-glutamyl-L-cysteine + ADP + phosphate + H(+). It participates in sulfur metabolism; glutathione biosynthesis; glutathione from L-cysteine and L-glutamate: step 1/2. The chain is Glutamate--cysteine ligase from Yersinia enterocolitica serotype O:8 / biotype 1B (strain NCTC 13174 / 8081).